The chain runs to 904 residues: Serine/arginine repetitive matrix protein 1 (904 aa).

Methionine 1 bears the N-acetylmethionine mark. Positions 1-151 (MDAGFFRGTS…ASMKKQDEDK (151 aa)) are necessary for DNA and RNA-binding. The interval 1–156 (MDAGFFRGTS…QDEDKDKRDK (156 aa)) is necessary for mRNA 3'-end cleavage and cytoplasmic accumulation. Arginine 7 carries the post-translational modification Citrulline. Residues 27–126 (QLKFAECLEK…AGIPSAFLEL (100 aa)) form the PWI domain. Lysine 127 participates in a covalent cross-link: Glycyl lysine isopeptide (Lys-Gly) (interchain with G-Cter in SUMO2). The segment covering 139-170 (EKLASMKKQDEDKDKRDKEEKESSREKRERSR) has biased composition (basic and acidic residues). The interval 139–904 (EKLASMKKQD…MRKAQVSPQS (766 aa)) is disordered. Lysine 140 carries the N6-acetyllysine modification. Residues 171–207 (SPRRRKSRSPSPRRRSSPVRRERKRSHSRSPRHRTKS) show a composition bias toward basic residues. Basic and acidic residues predominate over residues 214-234 (PEKKEKTPELPEPSVKVKEPS). Phosphothreonine is present on threonine 220. Serine 227 is subject to Phosphoserine. Lysine 231 participates in a covalent cross-link: Glycyl lysine isopeptide (Lys-Gly) (interchain with G-Cter in SUMO1); alternate. Lysine 231 participates in a covalent cross-link: Glycyl lysine isopeptide (Lys-Gly) (interchain with G-Cter in SUMO2); alternate. Phosphoserine is present on residues serine 234 and serine 240. Threonine 241 is modified (phosphothreonine). Residues 246-275 (KVPKPEPIPEPKEPSPEKNSKKEKEKEKTR) are compositionally biased toward basic and acidic residues. Lysine 249 is covalently cross-linked (Glycyl lysine isopeptide (Lys-Gly) (interchain with G-Cter in SUMO2)). Position 260 is a phosphoserine (serine 260). 2 stretches are compositionally biased toward basic residues: residues 276-329 (PRSR…RTPP) and 336-351 (PRHR…RRRS). The segment at 300–688 (RRHRSRSRSY…NKRHSPSPRP (389 aa)) is necessary for speckles and matrix localization. Low complexity predominate over residues 352–368 (SASLSGSSSSSSSSRSR). Serine 389, serine 391, serine 393, and serine 402 each carry phosphoserine. Threonine 406 is modified (phosphothreonine). A Phosphoserine modification is found at serine 414. Threonine 416 bears the Phosphothreonine mark. A phosphoserine mark is found at serine 420, serine 429, serine 431, and serine 436. Residues 428–438 (VSVSPGRTSGK) show a composition bias toward polar residues. Residue lysine 447 forms a Glycyl lysine isopeptide (Lys-Gly) (interchain with G-Cter in SUMO2) linkage. Residues serine 450 and serine 452 each carry the phosphoserine modification. Lysine 459 participates in a covalent cross-link: Glycyl lysine isopeptide (Lys-Gly) (interchain with G-Cter in SUMO2). Serine 463 and serine 465 each carry phosphoserine. A Glycyl lysine isopeptide (Lys-Gly) (interchain with G-Cter in SUMO2) cross-link involves residue lysine 472. Serine 478 carries the post-translational modification Phosphoserine. Low complexity predominate over residues 478–501 (SVQQRRQYRRQNQQSSSDSGSSSS). Over residues 503–518 (EDERPKRSHVKNGEVG) the composition is skewed to basic and acidic residues. Phosphoserine is present on residues serine 524, serine 526, serine 528, serine 530, serine 532, serine 549, and serine 551. Positions 533–560 (PRKRQKETSPRGRRRRSPSPPPTRRRRS) are enriched in basic residues. The residue at position 555 (threonine 555) is a Phosphothreonine. Phosphoserine occurs at positions 560 and 562. The segment covering 567–592 (PRRRRTPTPPPRRRTPSPPPRRRSPS) has biased composition (basic residues). Threonine 572, threonine 574, and threonine 581 each carry phosphothreonine. Serine 583 carries the phosphoserine modification. A compositionally biased stretch (low complexity) spans 593 to 605 (PRRYSPPIQRRYS). Tyrosine 596 carries the phosphotyrosine modification. Serine 597, serine 605, and serine 607 each carry phosphoserine. Position 614 is a phosphothreonine (threonine 614). Phosphoserine occurs at positions 616, 626, 628, 636, and 638. The span at 621–636 (PKRRASPSPPPKRRVS) shows a compositional bias: basic residues. Over residues 649-663 (TKRRSPSLSSKHRKG) the composition is skewed to basic residues. Phosphoserine is present on residues serine 694, serine 695, serine 696, serine 705, serine 707, serine 713, and serine 715. 2 stretches are compositionally biased toward low complexity: residues 701–719 (RRGA…PSTR) and 736–759 (AASP…SPEP). Position 718 is a phosphothreonine (threonine 718). Phosphoserine occurs at positions 738, 740, 748, 752, 754, 756, 769, 773, 775, and 777. The segment covering 771–786 (VQSQSPSTNWSPAVPV) has biased composition (low complexity). Threonine 778 is modified (phosphothreonine). Residues serine 781 and serine 791 each carry the phosphoserine modification. Threonine 793 bears the Phosphothreonine mark. Phosphoserine occurs at positions 795, 797, and 802. A compositionally biased stretch (basic residues) spans 809-834 (KKKKKKKDKKHKKDKKHKKHKKHKKE). Positions 837 to 866 (VAAAAAAAVTPAAIAAATTTLAQEEPVAAP) are enriched in low complexity. Lysine 869 participates in a covalent cross-link: Glycyl lysine isopeptide (Lys-Gly) (interchain with G-Cter in SUMO2). Threonine 872 carries the post-translational modification Phosphothreonine. Residue serine 874 is modified to Phosphoserine. The span at 882 to 892 (DLEKHLREKAL) shows a compositional bias: basic and acidic residues. Phosphoserine is present on serine 901.

Belongs to the splicing factor SR family. As to quaternary structure, identified in the spliceosome C complex. Found in a pre-mRNA splicing complex with SFRS4, SFRS5, SNRP70, SNRPA1, SRRM1 and SRRM2. Found in a pre-mRNA exonic splicing enhancer (ESE) complex with SNRP70, SNRPA1, SRRM1 and TRA2B/SFRS10. Component of the minor spliceosome, which splices U12-type introns. Found in a mRNA splicing-dependent exon junction complex (EJC) with DEK, PRPF8, NCBP1, RBM8A, RNPS1, SRRM1 and ALYREF/THOC4. Interacts with DDX39B, CPSF1, RBM8A, RNPS1, and ALYREF/THOC4. Seems to be a compound of RNA export complexes that are released from speckles in a ATP-dependent manner. Post-translationally, phosphorylated on multiple serine and threonine residues by DYRK3 during the G2-to-M transition, after the nuclear-envelope breakdown. Phosphorylation by DYRK3 promotes disassembly of nuclear speckles. Citrullinated by PADI4.

It is found in the nucleus matrix. It localises to the nucleus speckle. Functionally, part of pre- and post-splicing multiprotein mRNP complexes. As a component of the minor spliceosome, involved in the splicing of U12-type introns in pre-mRNAs. Involved in numerous pre-mRNA processing events. Promotes constitutive and exonic splicing enhancer (ESE)-dependent splicing activation by bridging together sequence-specific (SR family proteins, SFRS4, SFRS5 and TRA2B/SFRS10) and basal snRNP (SNRP70 and SNRPA1) factors of the spliceosome. Stimulates mRNA 3'-end cleavage independently of the formation of an exon junction complex. Binds both pre-mRNA and spliced mRNA 20-25 nt upstream of exon-exon junctions. Binds RNA and DNA with low sequence specificity and has similar preference for either double- or single-stranded nucleic acid substrates. In Homo sapiens (Human), this protein is Serine/arginine repetitive matrix protein 1 (SRRM1).